Here is a 246-residue protein sequence, read N- to C-terminus: Large ribosomal subunit protein uL2 (246 aa).

The interval 197 to 227 is disordered; the sequence is SPYAHPHGGGSHQKGGTPVPKTAPPGQKVGF.

It belongs to the universal ribosomal protein uL2 family. In terms of assembly, part of the 50S ribosomal subunit. Forms a bridge to the 30S subunit in the 70S ribosome.

In terms of biological role, one of the primary rRNA binding proteins. Required for association of the 30S and 50S subunits to form the 70S ribosome, for tRNA binding and peptide bond formation. It has been suggested to have peptidyltransferase activity; this is somewhat controversial. Makes several contacts with the 16S rRNA in the 70S ribosome. The chain is Large ribosomal subunit protein uL2 from Pyrobaculum aerophilum (strain ATCC 51768 / DSM 7523 / JCM 9630 / CIP 104966 / NBRC 100827 / IM2).